The following is a 312-amino-acid chain: DNA-directed RNA polymerase subunit alpha (312 aa).

The tract at residues 1 to 225 (MIEFEKPNIT…VEHFKVFESA (225 aa)) is alpha N-terminal domain (alpha-NTD). The segment at 243 to 312 (KEKKLEMTIE…DLGLSLRQED (70 aa)) is alpha C-terminal domain (alpha-CTD).

Belongs to the RNA polymerase alpha chain family. Homodimer. The RNAP catalytic core consists of 2 alpha, 1 beta, 1 beta' and 1 omega subunit. When a sigma factor is associated with the core the holoenzyme is formed, which can initiate transcription.

The catalysed reaction is RNA(n) + a ribonucleoside 5'-triphosphate = RNA(n+1) + diphosphate. Functionally, DNA-dependent RNA polymerase catalyzes the transcription of DNA into RNA using the four ribonucleoside triphosphates as substrates. This Lactobacillus helveticus (strain DPC 4571) protein is DNA-directed RNA polymerase subunit alpha.